The sequence spans 422 residues: Beta-1,3-galactosyltransferase 2 (422 aa).

Topologically, residues 1-24 (MLQWRRRHCCFAKMTWNAKRSLFR) are cytoplasmic. The chain crosses the membrane as a helical; Signal-anchor for type II membrane protein span at residues 25–45 (THLIGVLSLVFLFAMFLFFNH). Topologically, residues 46 to 422 (HDWLPGRAGF…AGRYRHRKLH (377 aa)) are lumenal. N-linked (GlcNAc...) asparagine glycans are attached at residues Asn-75, Asn-100, Asn-119, Asn-176, and Asn-226. A disordered region spans residues 90-110 (TLRPQTATNSNNTDLSPQGVT).

This sequence belongs to the glycosyltransferase 31 family. Requires Mn(2+) as cofactor. Detected in heart and brain.

Its subcellular location is the golgi apparatus membrane. It catalyses the reaction an N-acetyl-beta-D-glucosaminyl derivative + UDP-alpha-D-galactose = a beta-D-galactosyl-(1-&gt;3)-N-acetyl-beta-D-glucosaminyl derivative + UDP + H(+). The catalysed reaction is a beta-D-GlcNAc-(1-&gt;3)-beta-D-Gal-(1-&gt;4)-beta-D-Glc-(1&lt;-&gt;1)-Cer(d18:1(4E)) + UDP-alpha-D-galactose = a beta-D-Gal-(1-&gt;3)-beta-D-GlcNAc-(1-&gt;3)-beta-D-Gal-(1-&gt;4)-beta-D-Glc-(1&lt;-&gt;1')-Cer(d18:1(4E)) + UDP + H(+). The enzyme catalyses a neolactoside IV(3)-beta-GlcNAc-nLc4Cer(d18:1(4E)) + UDP-alpha-D-galactose = a neolactoside IV(3)-beta-[Gal-beta-(1-&gt;3)-GlcNAc]-nLc4Cer(d18:1(4E)) + UDP + H(+). The protein operates within protein modification; protein glycosylation. Functionally, beta-1,3-galactosyltransferase that transfers galactose from UDP-galactose to substrates with a terminal beta-N-acetylglucosamine (beta-GlcNAc) residue. Can also utilize substrates with a terminal galactose residue, albeit with lower efficiency. Involved in the biosynthesis of the carbohydrate moieties of glycolipids and glycoproteins. Inactive towards substrates with terminal alpha-N-acetylglucosamine (alpha-GlcNAc) or alpha-N-acetylgalactosamine (alpha-GalNAc) residues. This is Beta-1,3-galactosyltransferase 2 from Homo sapiens (Human).